The following is a 559-amino-acid chain: Laccase-7 (559 aa).

The signal sequence occupies residues 1-28 (MVIPWCSSMMRLLWFLFALLLARSVADA). N-linked (GlcNAc...) asparagine glycosylation is found at Asn32, Asn47, and Asn82. 2 consecutive Plastocyanin-like domains span residues 36-152 (TVES…PRNG) and 163-316 (EVPI…YNTT). Cu cation is bound by residues His86 and His88. Residues Asn112 and Asn120 are each glycosylated (N-linked (GlcNAc...) asparagine). Cu cation contacts are provided by His131 and His133. N-linked (GlcNAc...) asparagine glycosylation is found at Asn151, Asn210, Asn220, Asn257, Asn278, Asn314, Asn363, and Asn443. Positions 396 to 543 (FRLPSQMSLL…GMVFAVDNGT (148 aa)) constitute a Plastocyanin-like 3 domain. His461, His464, and His466 together coordinate Cu cation. Residue Asn484 is glycosylated (N-linked (GlcNAc...) asparagine). His522, Cys523, His524, and His528 together coordinate Cu cation. N-linked (GlcNAc...) asparagine glycosylation occurs at Asn541.

The protein belongs to the multicopper oxidase family. The cofactor is Cu cation.

Its subcellular location is the secreted. It is found in the extracellular space. It localises to the apoplast. The catalysed reaction is 4 hydroquinone + O2 = 4 benzosemiquinone + 2 H2O. Lignin degradation and detoxification of lignin-derived products. The polypeptide is Laccase-7 (LAC7) (Oryza sativa subsp. japonica (Rice)).